A 432-amino-acid chain; its full sequence is Adenylosuccinate synthetase (432 aa).

Residues 13–19 and 41–43 each bind GTP; these read GDEGKGK and GHT. Catalysis depends on Asp-14, which acts as the Proton acceptor. Mg(2+) is bound by residues Asp-14 and Gly-41. IMP-binding positions include 14–17, 39–42, Thr-130, Arg-144, Gln-225, Thr-240, and Arg-304; these read DEGK and NAGH. His-42 serves as the catalytic Proton donor. A substrate-binding site is contributed by 300-306; it reads ATTGRRR. GTP-binding positions include Arg-306, 332–334, and 415–417; these read KLD and STG.

This sequence belongs to the adenylosuccinate synthetase family. Homodimer. It depends on Mg(2+) as a cofactor.

The protein localises to the cytoplasm. It catalyses the reaction IMP + L-aspartate + GTP = N(6)-(1,2-dicarboxyethyl)-AMP + GDP + phosphate + 2 H(+). The protein operates within purine metabolism; AMP biosynthesis via de novo pathway; AMP from IMP: step 1/2. Functionally, plays an important role in the de novo pathway of purine nucleotide biosynthesis. Catalyzes the first committed step in the biosynthesis of AMP from IMP. The polypeptide is Adenylosuccinate synthetase (Klebsiella pneumoniae (strain 342)).